Here is a 364-residue protein sequence, read N- to C-terminus: Mannose-1-phosphate guanyltransferase (364 aa).

Belongs to the transferase hexapeptide repeat family.

The protein localises to the cytoplasm. The enzyme catalyses alpha-D-mannose 1-phosphate + GTP + H(+) = GDP-alpha-D-mannose + diphosphate. It functions in the pathway nucleotide-sugar biosynthesis; GDP-alpha-D-mannose biosynthesis; GDP-alpha-D-mannose from alpha-D-mannose 1-phosphate (GTP route): step 1/1. Functionally, involved in cell wall synthesis where it is required for glycosylation. Involved in cell cycle progression through cell-size checkpoint. The polypeptide is Mannose-1-phosphate guanyltransferase (mpg1) (Hypocrea jecorina (Trichoderma reesei)).